Here is a 388-residue protein sequence, read N- to C-terminus: Probable proton-coupled zinc antiporter SLC30A3 (388 aa).

The tract at residues 1-41 is disordered; sequence MEPSLATGGSETTRLVSARDRSSAGGGLRLKSLFTEPSEPL. Residues 1 to 75 are Cytoplasmic-facing; the sequence is MEPSLATGGS…SPERVQARRQ (75 aa). A phosphoserine mark is found at S63 and S66. The chain crosses the membrane as a helical span at residues 76–96; sequence LYAACAVCFIFMAGEVVGGYL. Topologically, residues 97–105 are lumenal; sequence AHSLAIMTD. A helical transmembrane segment spans residues 106-126; that stretch reads AAHLLADIGSMLASLFSLWLS. Zn(2+)-binding residues include H108 and D112. The Cytoplasmic portion of the chain corresponds to 127–145; that stretch reads TRPATRTMTFGWHRSETLG. The chain crosses the membrane as a helical span at residues 146-166; that stretch reads ALASVVSLWIVTGILLYLAFL. Residues 167 to 177 lie on the Lumenal side of the membrane; the sequence is RLLHSDYHIEA. Residues 178 to 198 traverse the membrane as a helical segment; the sequence is GAMLLTASIAVCANLLMAFVL. At 199–235 the chain is on the cytoplasmic side; it reads HQTGAPHSHGSTGAEYAPLEEGHGYPMSLGNTSVRAA. Residues 236 to 256 form a helical membrane-spanning segment; the sequence is FVHVLGDLLQSFGVLAASILI. Zn(2+)-binding residues include H238 and D242. Topologically, residues 257–263 are lumenal; the sequence is YFKPQYK. A helical membrane pass occupies residues 264–284; it reads VADPISTFLFSICALGSTAPT. Topologically, residues 285-388 are cytoplasmic; that stretch reads LRDVLLVLME…CLRCQEPSQA (104 aa).

The protein belongs to the cation diffusion facilitator (CDF) transporter (TC 2.A.4) family. SLC30A subfamily. Homodimer. Homodimerization is negligible compared to the human protein. It could explain the lower efficiency of zinc transport. Interacts with TMEM163. In terms of tissue distribution, expression is restricted to brain (at protein level). In the brain, most abundant in hippocampus and cerebral cortex. The mRNA is also detected in testis, expression being restricted to germ cells and highest in pachytene spermatocytes and round spermatids.

Its subcellular location is the cytoplasmic vesicle. The protein resides in the secretory vesicle. It localises to the synaptic vesicle membrane. The protein localises to the synapse. It is found in the synaptosome. Its subcellular location is the late endosome membrane. The protein resides in the lysosome membrane. The enzyme catalyses Zn(2+)(in) + 2 H(+)(out) = Zn(2+)(out) + 2 H(+)(in). In terms of biological role, probable proton-coupled zinc ion antiporter mediating the import of zinc from cytoplasm into synaptic vesicles and participating to cellular zinc ion homeostasis in the brain. This Mus musculus (Mouse) protein is Probable proton-coupled zinc antiporter SLC30A3.